The primary structure comprises 1746 residues: tRNA (32-2'-O)-methyltransferase regulator THADA (1746 aa).

A coiled-coil region spans residues 1252 to 1286; the sequence is EQALAEIRRIVVELKALQLRLKNTEAANTKLNTNV.

This sequence belongs to the THADA family. In terms of assembly, interacts with SERCA. In terms of tissue distribution, detected in the larval fat body, salivary glands and wing imaginal disks (at protein level).

It localises to the endoplasmic reticulum. Functionally, together with methyltransferase Trm7-32, methylates the 2'-O-ribose of nucleotides at position 32 of the anticodon loop of substrate tRNAs. Plays a key role in energy homeostasis by regulating the balance between energy storage and heat production. Functions by negatively regulating Ca(2+) signaling pathways that are involved in heat production and maintaining correct lipid storage in the fat body. Regulates Ca(2+) signaling pathways by reducing the activity of the calcium-transporting ATPase SERCA possibly by promoting uncoupling of SERCA ATP hydrolysis from calcium pumping. May also function in the nervous system to control feeding behavior. This is tRNA (32-2'-O)-methyltransferase regulator THADA from Drosophila melanogaster (Fruit fly).